A 134-amino-acid polypeptide reads, in one-letter code: ATP synthase epsilon chain, chloroplastic (134 aa).

The protein belongs to the ATPase epsilon chain family. In terms of assembly, F-type ATPases have 2 components, CF(1) - the catalytic core - and CF(0) - the membrane proton channel. CF(1) has five subunits: alpha(3), beta(3), gamma(1), delta(1), epsilon(1). CF(0) has three main subunits: a, b and c.

The protein resides in the plastid. It is found in the chloroplast thylakoid membrane. Functionally, produces ATP from ADP in the presence of a proton gradient across the membrane. The polypeptide is ATP synthase epsilon chain, chloroplastic (Porphyra purpurea (Red seaweed)).